A 674-amino-acid polypeptide reads, in one-letter code: DNA ligase (674 aa).

NAD(+) is bound by residues 34–38 (DAEYD), 84–85 (SL), and glutamate 116. Lysine 118 (N6-AMP-lysine intermediate) is an active-site residue. Positions 139, 174, 291, and 315 each coordinate NAD(+). Zn(2+) contacts are provided by cysteine 409, cysteine 412, cysteine 425, and cysteine 430. Residues 586–674 (REGEALKGLT…TGKDPRALTA (89 aa)) enclose the BRCT domain.

This sequence belongs to the NAD-dependent DNA ligase family. LigA subfamily. The cofactor is Mg(2+). Requires Mn(2+) as cofactor.

The enzyme catalyses NAD(+) + (deoxyribonucleotide)n-3'-hydroxyl + 5'-phospho-(deoxyribonucleotide)m = (deoxyribonucleotide)n+m + AMP + beta-nicotinamide D-nucleotide.. In terms of biological role, DNA ligase that catalyzes the formation of phosphodiester linkages between 5'-phosphoryl and 3'-hydroxyl groups in double-stranded DNA using NAD as a coenzyme and as the energy source for the reaction. It is essential for DNA replication and repair of damaged DNA. This Thermus sp. (strain AK16D) protein is DNA ligase.